We begin with the raw amino-acid sequence, 213 residues long: Uridine kinase (213 aa).

15–22 (GASASGKS) serves as a coordination point for ATP.

This sequence belongs to the uridine kinase family.

It localises to the cytoplasm. It carries out the reaction uridine + ATP = UMP + ADP + H(+). It catalyses the reaction cytidine + ATP = CMP + ADP + H(+). Its pathway is pyrimidine metabolism; CTP biosynthesis via salvage pathway; CTP from cytidine: step 1/3. It participates in pyrimidine metabolism; UMP biosynthesis via salvage pathway; UMP from uridine: step 1/1. This chain is Uridine kinase, found in Salmonella newport (strain SL254).